The following is a 336-amino-acid chain: Coproporphyrin III ferrochelatase (336 aa).

Residues Ser-52 and Tyr-116 each contribute to the Fe-coproporphyrin III site. Residues His-176 and Glu-259 each contribute to the Fe(2+) site.

It belongs to the ferrochelatase family.

The protein localises to the cytoplasm. The catalysed reaction is Fe-coproporphyrin III + 2 H(+) = coproporphyrin III + Fe(2+). It participates in porphyrin-containing compound metabolism; protoheme biosynthesis. Its function is as follows. Involved in coproporphyrin-dependent heme b biosynthesis. Catalyzes the insertion of ferrous iron into coproporphyrin III to form Fe-coproporphyrin III. The chain is Coproporphyrin III ferrochelatase from Mycobacterium leprae (strain Br4923).